We begin with the raw amino-acid sequence, 330 residues long: uncharacterized protein (330 aa).

Residues 2–22 (IKPIYLIIIGTVICLVILYYF) form a helical membrane-spanning segment. Asparagine 72, asparagine 94, asparagine 234, and asparagine 315 each carry an N-linked (GlcNAc...) asparagine; by host glycan.

It is found in the membrane. This is an uncharacterized protein from Acanthamoeba polyphaga mimivirus (APMV).